Consider the following 52-residue polypeptide: Defensin-like protein 2B (52 aa).

4 cysteine pairs are disulfide-bonded: Cys-4–Cys-52, Cys-16–Cys-37, Cys-22–Cys-46, and Cys-26–Cys-48.

In terms of assembly, forms oligomers in its native state.

Functionally, possesses antifungal activity sensitive to inorganic cations. This is Defensin-like protein 2B from Sinapis alba (White mustard).